The chain runs to 129 residues: Glycine cleavage system H protein (129 aa).

Residues isoleucine 24–arginine 106 enclose the Lipoyl-binding domain. Residue lysine 65 is modified to N6-lipoyllysine.

It belongs to the GcvH family. The glycine cleavage system is composed of four proteins: P, T, L and H. It depends on (R)-lipoate as a cofactor.

In terms of biological role, the glycine cleavage system catalyzes the degradation of glycine. The H protein shuttles the methylamine group of glycine from the P protein to the T protein. The polypeptide is Glycine cleavage system H protein (Cyanothece sp. (strain PCC 7425 / ATCC 29141)).